The primary structure comprises 457 residues: Transmembrane protease serine 5 (457 aa).

Residues 1 to 21 (MSLMLDDQPPMEAQYAEEGPG) are disordered. The Cytoplasmic portion of the chain corresponds to 1-49 (MSLMLDDQPPMEAQYAEEGPGPGIFRAEPGDQQHPISQAVCWRSMRRGC). Residues 50–70 (AVLGALGLLAGAGVGSWLLVL) traverse the membrane as a helical; Signal-anchor for type II membrane protein segment. At 71 to 457 (YLCPAASQPI…IHDTAQDSLL (387 aa)) the chain is on the extracellular side. Positions 112 to 207 (FRINSEDFLL…SGQVVSLRCS (96 aa)) constitute an SRCR domain. 7 disulfide bridges follow: Cys135–Cys196, Cys148–Cys206, Cys209–Cys328, Cys243–Cys259, Cys342–Cys411, Cys374–Cys390, and Cys401–Cys429. Residues Asn163, Asn170, and Asn195 are each glycosylated (N-linked (GlcNAc...) asparagine). The region spanning 218 to 453 (IVGGQSVAPG…FLDWIHDTAQ (236 aa)) is the Peptidase S1 domain. Catalysis depends on charge relay system residues His258 and Asp308. 2 N-linked (GlcNAc...) asparagine glycosylation sites follow: Asn319 and Asn375. Ser405 acts as the Charge relay system in catalysis.

This sequence belongs to the peptidase S1 family. In terms of tissue distribution, brain-specific. Predominantly expressed in neurons, in their axons, and at the synapses of motoneurons in the spinal cord.

Its subcellular location is the cell membrane. Functionally, may play a role in hearing. This chain is Transmembrane protease serine 5 (TMPRSS5), found in Homo sapiens (Human).